A 248-amino-acid chain; its full sequence is Probable transcriptional regulatory protein MYPE8020 (248 aa).

Belongs to the TACO1 family.

It is found in the cytoplasm. The chain is Probable transcriptional regulatory protein MYPE8020 from Malacoplasma penetrans (strain HF-2) (Mycoplasma penetrans).